Here is a 405-residue protein sequence, read N- to C-terminus: Deoxyguanosinetriphosphate triphosphohydrolase-like protein (405 aa).

One can recognise an HD domain in the interval 75–219; that stretch reads RLTHTIEVAQ…AAIADDIAYN (145 aa).

It belongs to the dGTPase family. Type 2 subfamily.

The sequence is that of Deoxyguanosinetriphosphate triphosphohydrolase-like protein from Rhizobium meliloti (strain 1021) (Ensifer meliloti).